Reading from the N-terminus, the 105-residue chain is MNKFYNYNSSSHQVLLNLKVKPNSKQNLISDFVIINNIPYLKLSIKATPEQGKANEEIINYLAKEWKLSRKDIEIIKGHTNSLKTILIKNIDEDYLNLIINSYIK.

Belongs to the UPF0235 family.

The polypeptide is UPF0235 protein RF_1332 (Rickettsia felis (strain ATCC VR-1525 / URRWXCal2) (Rickettsia azadi)).